We begin with the raw amino-acid sequence, 450 residues long: Phosphoglucosamine mutase (450 aa).

The Phosphoserine intermediate role is filled by S101. Residues S101, D242, D244, and D246 each contribute to the Mg(2+) site. S101 bears the Phosphoserine mark.

The protein belongs to the phosphohexose mutase family. The cofactor is Mg(2+). Post-translationally, activated by phosphorylation.

It carries out the reaction alpha-D-glucosamine 1-phosphate = D-glucosamine 6-phosphate. In terms of biological role, catalyzes the conversion of glucosamine-6-phosphate to glucosamine-1-phosphate. This Rhodopseudomonas palustris (strain ATCC BAA-98 / CGA009) protein is Phosphoglucosamine mutase.